Here is a 1128-residue protein sequence, read N- to C-terminus: MEPNDSTSTTMEEPESLEVLVKTLDSQTRTFIVGAQMNVKEFKEHIAASVSIPSEKQRLIYQGRVLQDDKKLQEYNVGGKVIHLVERAPPQTQLPSGASSGTGSASATHGGGPPPGTRGPGASVHDRNANSYVMVGTFNLPSDGSAVDVHINMEQAPIQSEPRVRLVMAQHMIRDIQTLLSRMECRGGSQAQHSQPPSQMPTVAPEPVALSSQTSESVESEVPPREPMAAEEVEERASAQSPGLSPSGPAPAGPTPAPETNAPNHPSPAEYVEVLQELQRLESRLQPFLQRYYEVLGAAATTDYNNNQEGREEDQRLINLVGESLRLLGNTFVALSDLRCNLACAPPRHLHVVRPMSHYTTPMVLQQAAIPIQINVGTTVTMTGNGTRPPPTPNAEAPPPGPGQASSLAPSSTTVESSTEGAPPPGPAPPPAASHPRVIRISHQSVEPVVMMHMNIQDSGTQPGGVPSAPTGPLGPTGHGQTLGQQVPGFPTAPTRVVIARPTPPQSRPSHPGGPPVSGALPGAGLGTNASLAQMVSGLVGQLLMQPVLVAQGTPGMAPPPAPATASASAGTTNTATTAGPAPGGPAQPPPPQPSASDLQFSQLLGNLLGPAGPGAGGPGMTSPTITVAMPGVPAFLQGMTDFLQATQTAAPPAPPPPPPPPPPAPEQQTAPPPGSPPGGAGSPGGLGPESLPLEFFTSVVQGVLSSLLGSLGARAGSSESIAAFIQRLSGSSNIFEPGADGALGFFGALLSLLCQNFSMVDVVMLLHGHFQPLQRLQPQLRSFFHQHYLGGQEPTPGNIRTATHTLITGLEEYVRESFSLVQVQPGVDIIRTNLEFLQEQFNSIAAHVMHCTDSGFGARLLELCNQGLFECLALNLHCLGGQQMELAAVINGRIRRMSRGVNPSLVSWLTTMMGLRLQVVLEHMPVGPDAILRYVRRVGDPPQPLPEEPMEVQGSERTSPEPQRENASPAPGTTAEEAMSRGPPPAPEGGSRDEQDGAAAETEPWAAAVPPEWVPIIQQDIQSQRKVKPQPPLSDAYLSGMPAKRRKTMQGEGPQLLLSEAVSRAAKAAGARPLTSPESLSRDLEAPEVQESYRQQLRADIQKRLQEDPNYSPQRFPNAHRAFAEDP.

Position 1 is an N-acetylmethionine (M1). Residues 17 to 92 (LEVLVKTLDS…HLVERAPPQT (76 aa)) form the Ubiquitin-like domain. Disordered regions lie at residues 87 to 126 (RAPP…SVHD), 185 to 267 (CRGG…NHPS), 380 to 435 (VTMT…AASH), 456 to 523 (IQDS…ALPG), and 555 to 598 (PGMA…SASD). Residues 95-108 (PSGASSGTGSASAT) are compositionally biased toward low complexity. Position 96 is a phosphoserine (S96). The residue at position 117 (T117) is a Phosphothreonine. Over residues 189–201 (SQAQHSQPPSQMP) the composition is skewed to polar residues. Residues 236–265 (RASAQSPGLSPSGPAPAGPTPAPETNAPNH) form repeat 1. The tract at residues 236–630 (RASAQSPGLS…MTSPTITVAM (395 aa)) is 4 X 29 AA approximate repeats. Positions 238 to 247 (SAQSPGLSPS) are enriched in low complexity. 2 stretches are compositionally biased toward pro residues: residues 248–257 (GPAPAGPTPA) and 388–402 (RPPP…PPGP). Positions 403–412 (GQASSLAPSS) are enriched in low complexity. The stretch at 410–438 (PSSTTVESSTEGAPPPGPAPPPAASHPRV) is repeat 2. Pro residues-rich tracts occupy residues 422–433 (APPPGPAPPPAA) and 502–515 (PTPP…PGGP). A compositionally biased stretch (low complexity) spans 564 to 581 (ATASASAGTTNTATTAGP). Repeat copies occupy residues 569–596 (SAGT…QPSA) and 602–630 (SQLL…TVAM). Residues 583–594 (PGGPAQPPPPQP) are compositionally biased toward pro residues. Disordered regions lie at residues 648 to 689 (QTAA…GLGP) and 939 to 1128 (VGDP…AEDP). Residues 652-677 (PPAPPPPPPPPPPAPEQQTAPPPGSP) are compositionally biased toward pro residues. Gly residues predominate over residues 678 to 688 (PGGAGSPGGLG). A phosphoserine mark is found at S960 and S969. Residues 999 to 1016 (AAAETEPWAAAVPPEWVP) are compositionally biased toward low complexity. The segment at 1006 to 1036 (WAAAVPPEWVPIIQQDIQSQRKVKPQPPLSD) is required for interaction with GET4. Residues 1008–1050 (AAVPPEWVPIIQQDIQSQRKVKPQPPLSDAYLSGMPAKRRKTM) carry the Nuclear localization site motif. The segment at 1018 to 1128 (IQQDIQSQRK…NAHRAFAEDP (111 aa)) is sufficient for the delivery of client proteins to the endoplasmic reticulum. T1049 bears the Phosphothreonine mark. The BAG-similar domain, required and sufficient for interaction with UBL4A stretch occupies residues 1054–1111 (GPQLLLSEAVSRAAKAAGARPLTSPESLSRDLEAPEVQESYRQQLRADIQKRLQEDPN). A compositionally biased stretch (low complexity) spans 1062–1072 (AVSRAAKAAGA). Phosphoserine occurs at positions 1077 and 1113.

As to quaternary structure, component of the BAG6/BAT3 complex, also named BAT3 complex, at least composed of BAG6, UBL4A and GET4/TRC35. Interacts with GET4; the interaction is direct and localizes BAG6 in the cytosol. Interacts with UBL4A; the interaction is direct and required for UBL4A protein stability. Interacts with AIFM1. Interacts with HSPA2. Interacts with CTCFL. Interacts with p300/EP300. Interacts (via ubiquitin-like domain) with RNF126; required for BAG6-dependent ubiquitination of proteins mislocalized to the cytosol. Interacts (via ubiquitin-like domain) with SGTA; SGTA competes with RNF126 by binding the same region of BAG6, thereby promoting deubiquitination of BAG6-target proteins and rescuing them from degradation. Interacts with ricin A chain. Interacts with VCP and AMFR; both form the VCP/p97-AMFR/gp78 complex. Interacts with SYVN1. Interacts with USP13; the interaction is direct and may mediate UBL4A deubiquitination. Interacts with ZFAND2B. Interacts with KPNA2. Interacts with UBQLN4. Post-translationally, ricin can induce a cleavage by the caspase CASP3. The released C-terminal peptide induces apoptosis.

The protein localises to the cytoplasm. It is found in the cytosol. It localises to the nucleus. Its subcellular location is the secreted. The protein resides in the extracellular exosome. Its function is as follows. ATP-independent molecular chaperone preventing the aggregation of misfolded and hydrophobic patches-containing proteins. Functions as part of a cytosolic protein quality control complex, the BAG6/BAT3 complex, which maintains these client proteins in a soluble state and participates in their proper delivery to the endoplasmic reticulum or alternatively can promote their sorting to the proteasome where they undergo degradation. The BAG6/BAT3 complex is involved in the post-translational delivery of tail-anchored/type II transmembrane proteins to the endoplasmic reticulum membrane. Recruited to ribosomes, it interacts with the transmembrane region of newly synthesized tail-anchored proteins and together with SGTA and ASNA1 mediates their delivery to the endoplasmic reticulum. Client proteins that cannot be properly delivered to the endoplasmic reticulum are ubiquitinated by RNF126, an E3 ubiquitin-protein ligase associated with BAG6 and are sorted to the proteasome. SGTA which prevents the recruitment of RNF126 to BAG6 may negatively regulate the ubiquitination and the proteasomal degradation of client proteins. Similarly, the BAG6/BAT3 complex also functions as a sorting platform for proteins of the secretory pathway that are mislocalized to the cytosol either delivering them to the proteasome for degradation or to the endoplasmic reticulum. The BAG6/BAT3 complex also plays a role in the endoplasmic reticulum-associated degradation (ERAD), a quality control mechanism that eliminates unwanted proteins of the endoplasmic reticulum through their retrotranslocation to the cytosol and their targeting to the proteasome. It maintains these retrotranslocated proteins in an unfolded yet soluble state condition in the cytosol to ensure their proper delivery to the proteasome. BAG6 is also required for selective ubiquitin-mediated degradation of defective nascent chain polypeptides by the proteasome. In this context, it may participate in the production of antigenic peptides and play a role in antigen presentation in immune response. BAG6 is also involved in endoplasmic reticulum stress-induced pre-emptive quality control, a mechanism that selectively attenuates the translocation of newly synthesized proteins into the endoplasmic reticulum and reroutes them to the cytosol for proteasomal degradation. BAG6 may ensure the proper degradation of these proteins and thereby protects the endoplasmic reticulum from protein overload upon stress. By inhibiting the polyubiquitination and subsequent proteasomal degradation of HSPA2 it may also play a role in the assembly of the synaptonemal complex during spermatogenesis. Also positively regulates apoptosis by interacting with and stabilizing the proapoptotic factor AIFM1. By controlling the steady-state expression of the IGF1R receptor, indirectly regulates the insulin-like growth factor receptor signaling pathway. Involved in DNA damage-induced apoptosis: following DNA damage, accumulates in the nucleus and forms a complex with p300/EP300, enhancing p300/EP300-mediated p53/TP53 acetylation leading to increase p53/TP53 transcriptional activity. When nuclear, may also act as a component of some chromatin regulator complex that regulates histone 3 'Lys-4' dimethylation (H3K4me2). In terms of biological role, released extracellularly via exosomes, it is a ligand of the natural killer/NK cells receptor NCR3 and stimulates NK cells cytotoxicity. It may thereby trigger NK cells cytotoxicity against neighboring tumor cells and immature myeloid dendritic cells (DC). Functionally, may mediate ricin-induced apoptosis. The protein is Large proline-rich protein BAG6 of Sus scrofa (Pig).